The primary structure comprises 505 residues: Midnolin (505 aa).

Residues 32–106 enclose the Ubiquitin-like domain; it reads MSLAIHSTTG…LTLVPTVEAG (75 aa). Disordered regions lie at residues 155-176, 228-305, and 440-485; these read PWHR…VSDF, SIAT…SRKP, and RLRR…GLDF. The segment covering 238-262 has biased composition (low complexity); the sequence is RPVSSAARVPPVSSSPSSPVSPSPV. A compositionally biased stretch (polar residues) spans 263-282; sequence TAGTFQSHAASTTCPEQTDC. Positions 283–300 are enriched in low complexity; the sequence is SPPASSNTTSTPGSSPTP.

In terms of assembly, interacts with GCK; the interaction occurs preferentially at low glucose levels. Interacts with the proteasome.

The protein resides in the nucleus. Its subcellular location is the cytoplasm. It is found in the cytosol. The protein localises to the nucleolus. In terms of biological role, facilitates the ubiquitin-independent proteasomal degradation of stimulus-induced transcription factors such as FOSB, EGR1, NR4A1, and IRF4 to the proteasome for degradation. Promotes also the degradation of other substrates such as CBX4. Plays a role in inhibiting the activity of glucokinase GCK and both glucose-induced and basal insulin secretion. This Rattus norvegicus (Rat) protein is Midnolin.